Consider the following 582-residue polypeptide: ATP-dependent lipid A-core flippase (582 aa).

Helical transmembrane passes span 27 to 47 (LIVAVIALVINAISDTYMISL), 69 to 89 (LIIFVMMFIRGTSGFVSTYCL), 142 to 162 (ALVSIVREGASIIGLLVLMFY), 165 to 185 (WQLSLVLFAVAPVVAWGIGVV), and 249 to 269 (AAANPIIQMIASFAIVAVLYL). Residues 28–310 (IVAVIALVIN…LTNVTSQFQR (283 aa)) form the ABC transmembrane type-1 domain. Residues 342–578 (VSVKDVSFTY…NGAYAQLHRI (237 aa)) enclose the ABC transporter domain. Residue 376 to 383 (GRSGSGKS) coordinates ATP.

The protein belongs to the ABC transporter superfamily. Lipid exporter (TC 3.A.1.106) family. As to quaternary structure, homodimer.

It localises to the cell inner membrane. The enzyme catalyses ATP + H2O + lipid A-core oligosaccharideSide 1 = ADP + phosphate + lipid A-core oligosaccharideSide 2.. Functionally, involved in lipopolysaccharide (LPS) biosynthesis. Translocates lipid A-core from the inner to the outer leaflet of the inner membrane. Transmembrane domains (TMD) form a pore in the inner membrane and the ATP-binding domain (NBD) is responsible for energy generation. The chain is ATP-dependent lipid A-core flippase from Vibrio parahaemolyticus serotype O3:K6 (strain RIMD 2210633).